The primary structure comprises 149 residues: Deoxyuridine 5'-triphosphate nucleotidohydrolase (149 aa).

Substrate contacts are provided by residues 70-72 (RSG), Asn83, and 87-89 (LID).

It belongs to the dUTPase family. Mg(2+) serves as cofactor.

The enzyme catalyses dUTP + H2O = dUMP + diphosphate + H(+). It participates in pyrimidine metabolism; dUMP biosynthesis; dUMP from dCTP (dUTP route): step 2/2. This enzyme is involved in nucleotide metabolism: it produces dUMP, the immediate precursor of thymidine nucleotides and it decreases the intracellular concentration of dUTP so that uracil cannot be incorporated into DNA. This chain is Deoxyuridine 5'-triphosphate nucleotidohydrolase, found in Blochmanniella pennsylvanica (strain BPEN).